A 454-amino-acid polypeptide reads, in one-letter code: Transmembrane protease serine 3 (454 aa).

Topologically, residues 1 to 48 are cytoplasmic; it reads MGENDPPAVEAPFSFRSLFGLDDLKISPVAPDADAVAAQILSLLPLKF. A helical; Signal-anchor for type II membrane protein membrane pass occupies residues 49 to 69; it reads FPIIVIGIIALILALAIGLGI. Residues 70–454 lie on the Extracellular side of the membrane; that stretch reads HFDCSGKYRC…HEQMERDLKT (385 aa). Residues 72 to 108 enclose the LDL-receptor class A domain; sequence DCSGKYRCRSSFKCIELIARCDGVSDCKDGEDEYRCV. Cystine bridges form between Cys-73–Cys-85, Cys-79–Cys-98, Cys-92–Cys-107, Cys-129–Cys-194, Cys-142–Cys-204, Cys-207–Cys-324, Cys-242–Cys-258, Cys-338–Cys-407, Cys-370–Cys-386, and Cys-397–Cys-425. An SRCR domain is found at 109–205; it reads RVGGQNAVLQ…SGHVVTLQCT (97 aa). The region spanning 217 to 449 is the Peptidase S1 domain; it reads IVGGNMSLLS…FLDWIHEQME (233 aa). N-linked (GlcNAc...) asparagine glycosylation is present at Asn-221. Catalysis depends on charge relay system residues His-257 and Asp-304. Ser-401 functions as the Charge relay system in the catalytic mechanism.

The protein belongs to the peptidase S1 family. In terms of processing, undergoes autoproteolytic activation. As to expression, expressed in many tissues including fetal cochlea. Isoform T is found at increased levels in some carcinomas.

It is found in the endoplasmic reticulum membrane. Its function is as follows. Probable serine protease that plays a role in hearing. Acts as a permissive factor for cochlear hair cell survival and activation at the onset of hearing and is required for saccular hair cell survival. Activates ENaC (in vitro). This chain is Transmembrane protease serine 3 (TMPRSS3), found in Homo sapiens (Human).